Here is a 484-residue protein sequence, read N- to C-terminus: Probable receptor-like protein kinase At5g18500 (484 aa).

A helical transmembrane segment spans residues 21 to 41 (IIVIVLSAIFVVVLAISLWLT). The segment at 72-135 (RVDEVSSSNG…SVSSANPLTA (64 aa)) is disordered. Residues 91-105 (KFGDKEPEKGIKAES) are compositionally biased toward basic and acidic residues. Positions 125–134 (SSVSSANPLT) are enriched in polar residues. A Phosphothreonine modification is found at threonine 155. The Protein kinase domain maps to 166 to 445 (FSRDNIIGDG…MLESEEYPIA (280 aa)). Residues 172–180 (IGDGGYGVV) and lysine 194 contribute to the ATP site. At tyrosine 239 the chain carries Phosphotyrosine. Aspartate 292 acts as the Proton acceptor in catalysis. Position 296 is a phosphoserine (serine 296). Residues threonine 326 and threonine 331 each carry the phosphothreonine modification. Tyrosine 339 is subject to Phosphotyrosine. Positions 425–484 (EKRPRMSQVARMLESEEYPIAREDRRRRRSQNGTTRDSDPPRNSTDTDKSEYHDLKPEGG) are disordered. Basic and acidic residues predominate over residues 460–484 (RDSDPPRNSTDTDKSEYHDLKPEGG).

This sequence belongs to the protein kinase superfamily. Ser/Thr protein kinase family.

It is found in the cell membrane. The catalysed reaction is L-seryl-[protein] + ATP = O-phospho-L-seryl-[protein] + ADP + H(+). It catalyses the reaction L-threonyl-[protein] + ATP = O-phospho-L-threonyl-[protein] + ADP + H(+). The sequence is that of Probable receptor-like protein kinase At5g18500 from Arabidopsis thaliana (Mouse-ear cress).